A 492-amino-acid chain; its full sequence is Lysine--tRNA ligase (492 aa).

2 residues coordinate Mg(2+): Glu-403 and Glu-410.

The protein belongs to the class-II aminoacyl-tRNA synthetase family. In terms of assembly, homodimer. The cofactor is Mg(2+).

It is found in the cytoplasm. It carries out the reaction tRNA(Lys) + L-lysine + ATP = L-lysyl-tRNA(Lys) + AMP + diphosphate. The polypeptide is Lysine--tRNA ligase (Mycoplasmoides gallisepticum (strain R(low / passage 15 / clone 2)) (Mycoplasma gallisepticum)).